The sequence spans 513 residues: Histidine ammonia-lyase (513 aa).

The segment at residues 142–144 is a cross-link (5-imidazolinone (Ala-Gly)); sequence ASG. A 2,3-didehydroalanine (Ser) modification is found at S143.

It belongs to the PAL/histidase family. Post-translationally, contains an active site 4-methylidene-imidazol-5-one (MIO), which is formed autocatalytically by cyclization and dehydration of residues Ala-Ser-Gly.

It localises to the cytoplasm. The enzyme catalyses L-histidine = trans-urocanate + NH4(+). It participates in amino-acid degradation; L-histidine degradation into L-glutamate; N-formimidoyl-L-glutamate from L-histidine: step 1/3. In Mesorhizobium japonicum (strain LMG 29417 / CECT 9101 / MAFF 303099) (Mesorhizobium loti (strain MAFF 303099)), this protein is Histidine ammonia-lyase.